A 362-amino-acid polypeptide reads, in one-letter code: MPSTLQVLAKKVLALEHKENDHISREYYYHILKCCGLWWHEAPIILCFNGSKQMMIKTPIFEEGILLNTALMKAVQDNNYELIKLFTEWGANINYGLISINTEYTRDLCRKLGAKERLERHEVIQIMFKILDDTTSSNMILCHELFTNNPLLENVNMGQMRMIIHWRMKNLTDLLLNNNSISEILTKFWYGIAVKYNLKDAIQYFYQRFINFNEWRVTCALSFNNVNDLHKMYITERVHMNNDEMMNLACSIQDKNFSTIYYCFLLGANINQAMFISVLNYNIFNIFFCIDLGADAFKEGKALAKQKGYNEIVEILSLDIIYSPNTDFSSKIKPEHISFLLKNFYPKNLYIFDRCKPGLYYP.

Residues 66–98 (LLNTALMKAVQDNNYELIKLFTEWGANINYGLI) form an ANK repeat.

This sequence belongs to the asfivirus MGF 360 family.

In terms of biological role, plays a role in virus cell tropism, and may be required for efficient virus replication in macrophages. This Ornithodoros (relapsing fever ticks) protein is Protein MGF 360-19R.